The sequence spans 382 residues: Lactaldehyde reductase (382 aa).

Residues aspartate 38, asparagine 70, 97–98 (GS), 139–143 (TTAGT), asparagine 150, lysine 161, and 180–184 (MMDGM) contribute to the NAD(+) site. Fe cation is bound by residues aspartate 195, histidine 199, histidine 262, and histidine 276.

It belongs to the iron-containing alcohol dehydrogenase family. In terms of assembly, homodimer. Requires Fe cation as cofactor.

It carries out the reaction (R)-propane-1,2-diol + NAD(+) = (R)-lactaldehyde + NADH + H(+). It catalyses the reaction (S)-propane-1,2-diol + NAD(+) = (S)-lactaldehyde + NADH + H(+). It participates in carbohydrate degradation; L-fucose degradation. The chain is Lactaldehyde reductase (fucO) from Escherichia coli O157:H7.